A 1184-amino-acid polypeptide reads, in one-letter code: C5a peptidase (1184 aa).

A signal peptide spans 1–31 (MRKKQKLPFDKLAIALMSTSILLNAQSDIKA). Polar residues-rich tracts occupy residues 33 to 52 (TVTE…QPTA) and 89 to 100 (AKTTDTPATSKA). Positions 33-117 (TVTEDTPATE…PSQVKTLQEK (85 aa)) are disordered. One can recognise a Peptidase S8 domain in the interval 99–581 (KATIRDLNDP…AGAVDAKKAS (483 aa)). Catalysis depends on charge relay system residues Asp130, His193, and Ser512. Basic and acidic residues-rich tracts occupy residues 1029–1054 (EGHS…KPEQ), 1061–1071 (PDKKPETKPEQ), 1078–1088 (PDKKPEAKPEQ), and 1095–1107 (PDKK…EKDS). The tract at residues 1029–1150 (EGHSNKPEQD…RDQLPTTNDK (122 aa)) is disordered. A run of 4 repeats spans residues 1034 to 1067 (KPEQ…KPET), 1068 to 1084 (KPEQ…KPEA), 1085 to 1101 (KPEQ…KPET), and 1102 to 1118 (KPEK…TPQK). Residues 1034–1118 (KPEQDGSDQV…GQTPGKTPQK (85 aa)) form a 4 X 17 AA tandem repeats region. The span at 1109-1123 (GQTPGKTPQKGQPSR) shows a compositional bias: polar residues. The LPXTG sorting signal motif lies at 1144-1148 (LPTTN). Thr1147 bears the Pentaglycyl murein peptidoglycan amidated threonine mark. Positions 1148-1184 (NDKDTNRLHLLKLVMTTFFFGLVAHIFKTKRQKETKK) are cleaved as a propeptide — removed by sortase.

It belongs to the peptidase S8 family. Cleaved by SpeB protease; leading to its degradation. Degradation by SpeB is probably strictly regulated to preserve integrity of C5a peptidase.

The protein resides in the secreted. It localises to the cell wall. The enzyme catalyses The primary cleavage site is at 67-His-|-Lys-68 in human C5a with a minor secondary cleavage site at 58-Ala-|-Ser-59.. Functionally, this virulence factor of S.pyogenes specifically cleaves the human serum chemotaxin C5a at '68-Lys-|-Asp-69' bond near its C-terminus, destroying its ability to serve as a chemoattractant. The chain is C5a peptidase (scpA) from Streptococcus pyogenes serotype M6 (strain ATCC BAA-946 / MGAS10394).